Here is a 321-residue protein sequence, read N- to C-terminus: Chlorohydroquinone/hydroquinone 1,2-dioxygenase (321 aa).

VOC domains follow at residues 10–138 (GLHH…IIEQ) and 160–282 (GFHS…ASVT). Fe cation-binding residues include His-162, His-229, and Glu-278.

Belongs to the extradiol ring-cleavage dioxygenase family. It depends on Fe(2+) as a cofactor.

The catalysed reaction is hydroquinone + O2 = (2E,4Z)-4-hydroxy-6-oxohexa-2,4-dienoate + H(+). It catalyses the reaction chlorohydroquinone + O2 = 5-chlorocarbonyl-4-hydroxy-penta-2,4-dienoate + H(+). It participates in xenobiotic degradation; gamma-hexachlorocyclohexane degradation. Cleaves aromatic rings with two hydroxyl groups at para positions with consumption of O(2). Catalyzes the cleavage of chlorohydroquinone (CHQ), as part of the gamma-hexachlorocyclohexane (gamma-HCH or lindane) degradation pathway, producing 5-chlorocarbonyl-4-hydroxy-penta-2,4-dienoate as an intermediate product that can react with water yielding maleylacetate. This degradation pathway allows S.japonicum UT26 to grow on gamma-HCH as the sole source of carbon and energy. Can also use hydroquinone (HQ) as substrate, leading to gamma-hydroxymuconic semialdehyde. Is not able to convert catechol, contrary to meta-cleavage dioxygenases. The chain is Chlorohydroquinone/hydroquinone 1,2-dioxygenase from Sphingobium indicum (strain DSM 16413 / CCM 7287 / MTCC 6362 / UT26 / NBRC 101211 / UT26S) (Sphingobium japonicum).